Here is a 229-residue protein sequence, read N- to C-terminus: Flagellar L-ring protein (229 aa).

A signal peptide spans 1–25 (MKQVRLLPPAPVRAVCALAVAALAG). A lipid anchor (N-palmitoyl cysteine) is attached at C26. C26 carries S-diacylglycerol cysteine lipidation.

It belongs to the FlgH family. In terms of assembly, the basal body constitutes a major portion of the flagellar organelle and consists of four rings (L,P,S, and M) mounted on a central rod.

The protein localises to the cell outer membrane. Its subcellular location is the bacterial flagellum basal body. In terms of biological role, assembles around the rod to form the L-ring and probably protects the motor/basal body from shearing forces during rotation. The sequence is that of Flagellar L-ring protein from Burkholderia ambifaria (strain ATCC BAA-244 / DSM 16087 / CCUG 44356 / LMG 19182 / AMMD) (Burkholderia cepacia (strain AMMD)).